The chain runs to 249 residues: Triosephosphate isomerase (249 aa).

9–11 contacts substrate; sequence NWK. The Electrophile role is filled by H95. Catalysis depends on E166, which acts as the Proton acceptor. Residues G172, S211, and 232–233 contribute to the substrate site; that span reads GG.

The protein belongs to the triosephosphate isomerase family. As to quaternary structure, homodimer.

Its subcellular location is the cytoplasm. The enzyme catalyses D-glyceraldehyde 3-phosphate = dihydroxyacetone phosphate. Its pathway is carbohydrate biosynthesis; gluconeogenesis. The protein operates within carbohydrate degradation; glycolysis; D-glyceraldehyde 3-phosphate from glycerone phosphate: step 1/1. Involved in the gluconeogenesis. Catalyzes stereospecifically the conversion of dihydroxyacetone phosphate (DHAP) to D-glyceraldehyde-3-phosphate (G3P). The chain is Triosephosphate isomerase from Legionella pneumophila subsp. pneumophila (strain Philadelphia 1 / ATCC 33152 / DSM 7513).